Here is a 426-residue protein sequence, read N- to C-terminus: MKLQKPKGTQDILPGESAKWQYVENVIRNLFKQYHYDEIRTPMFEHYEVISRSVGDTTDIVTKEMYDFHDKGDRHITLRPEGTAPVVRSYVENKLFAPEVQKPTKMYYIGSMFRYERPQAGRLREFHQVGVECFGSNNPATDVETIAMGHHLFEDLGIKNVKLHLNSLGNPESRQAYRQALIDYLTPIREQLSKDSQRRLNENPLRVLDSKEPEDKLAVENAPSILDYLDESSQAHFDAVCHMLDALNIPYIIDTNMVRGLDYYNHTIFEFITEIEDNELTICAGGRYDGLVSYFGGPETPAFGFGLGLERLLLILDKQGISLPIENTIDLYIAVLGSEANLAALDLAQSIRHQGFKVERDYLGRKIKAQFKSADTFNAKVIMTLGSSEVDSKEVGLKNNQTRQEVKVSFENIKTDFSSVLKQLGL.

Belongs to the class-II aminoacyl-tRNA synthetase family. Homodimer.

Its subcellular location is the cytoplasm. The catalysed reaction is tRNA(His) + L-histidine + ATP = L-histidyl-tRNA(His) + AMP + diphosphate + H(+). This chain is Histidine--tRNA ligase, found in Streptococcus agalactiae serotype III (strain NEM316).